A 124-amino-acid chain; its full sequence is Small ribosomal subunit protein eS6 (124 aa).

It belongs to the eukaryotic ribosomal protein eS6 family.

This Methanococcus maripaludis (strain C7 / ATCC BAA-1331) protein is Small ribosomal subunit protein eS6.